Reading from the N-terminus, the 245-residue chain is DNA repair protein RecO (245 aa).

This sequence belongs to the RecO family.

Its function is as follows. Involved in DNA repair and RecF pathway recombination. The sequence is that of DNA repair protein RecO from Bartonella bacilliformis (strain ATCC 35685 / KC583 / Herrer 020/F12,63).